The primary structure comprises 1201 residues: ATPase with bromodomain protein abo2 (1201 aa).

2 disordered regions span residues 1 to 223 and 305 to 324; these read MRRR…MRGP and CDSDETSELSSTSSEQTSDV. Acidic residues predominate over residues 13–24; that stretch reads DDNEDNEEDDDY. Residues 29-38 show a composition bias toward basic and acidic residues; sequence HSEKSEDHSN. The span at 66 to 89 shows a compositional bias: polar residues; the sequence is FSSLQKHLNTETPSFSVSIENPSK. The span at 129–146 shows a compositional bias: acidic residues; sequence TDNNEDESTTFKDEEDDL. Over residues 212 to 221 the composition is skewed to basic residues; it reads RRGRRKRKMR. The segment covering 312-323 has biased composition (low complexity); sequence ELSSTSSEQTSD. 413 to 420 serves as a coordination point for ATP; sequence GPPGTGKT. The Bromo domain occupies 897 to 1026; that stretch reads KIKNKIQVKL…AHAELNVDEL (130 aa).

This sequence belongs to the AAA ATPase family.

The protein localises to the nucleus. The enzyme catalyses ATP + H2O = ADP + phosphate + H(+). Probable ATPase which may play a role in nucleosome organization. The protein is ATPase with bromodomain protein abo2 of Schizosaccharomyces pombe (strain 972 / ATCC 24843) (Fission yeast).